We begin with the raw amino-acid sequence, 374 residues long: Double homeobox protein 4C (374 aa).

Residues 1–10 (MALPTPSDST) are compositionally biased toward polar residues. Disordered regions lie at residues 1–24 (MALP…RRRL), 72–102 (SRQL…TAVT), and 218–374 (LQPS…YELL). DNA-binding regions (homeobox) lie at residues 19 to 78 (GRRR…LRQH) and 94 to 153 (GRRK…PGQG). The segment covering 265–274 (KSREDRDPQR) has biased composition (basic and acidic residues). Low complexity-rich tracts occupy residues 278 to 302 (PGPC…LAPP) and 319 to 329 (AGAAWEPQAGA). Positions 354-374 (QPLQEPGRSSTVTSSLLYELL) are enriched in polar residues.

As to quaternary structure, may interact with MYF5; regulates MYF5 expression. Expressed in muscles, as well as in primary myoblasts and myotubes (at protein level).

It localises to the nucleus. The protein localises to the cytoplasm. Its function is as follows. Down-regulates MYOD1 expression and may up-regulate MYF5 expression. May regulate microRNA (miRNA) transcription, up-regulating the expression of some myogenic miRNAs, including MIR1-1, MIR133A2, MIR133B and MIR206. Impairs the differentiation of myoblasts and may be involved in muscle regeneration. Reduces DUX4-induced nuclear localization of CTNNB1/beta-catenin and its subsequent activation of target genes. The chain is Double homeobox protein 4C (DUX4L9) from Homo sapiens (Human).